The sequence spans 279 residues: 3-methyl-2-oxobutanoate hydroxymethyltransferase (279 aa).

Residues Asp-43 and Asp-82 each contribute to the Mg(2+) site. 3-methyl-2-oxobutanoate contacts are provided by residues 43–44 (DS), Asp-82, and Lys-112. Glu-114 is a Mg(2+) binding site. Glu-181 functions as the Proton acceptor in the catalytic mechanism.

This sequence belongs to the PanB family. In terms of assembly, homodecamer; pentamer of dimers. The cofactor is Mg(2+).

It localises to the cytoplasm. It carries out the reaction 3-methyl-2-oxobutanoate + (6R)-5,10-methylene-5,6,7,8-tetrahydrofolate + H2O = 2-dehydropantoate + (6S)-5,6,7,8-tetrahydrofolate. It functions in the pathway cofactor biosynthesis; (R)-pantothenate biosynthesis; (R)-pantoate from 3-methyl-2-oxobutanoate: step 1/2. Catalyzes the reversible reaction in which hydroxymethyl group from 5,10-methylenetetrahydrofolate is transferred onto alpha-ketoisovalerate to form ketopantoate. This chain is 3-methyl-2-oxobutanoate hydroxymethyltransferase, found in Bacillus anthracis (strain A0248).